The primary structure comprises 262 residues: Polyamine aminopropyltransferase (262 aa).

A PABS domain is found at 1–249 (MWITQEITPY…DIHRAAFALP (249 aa)). Residue N29 participates in S-methyl-5'-thioadenosine binding. Residue D83 participates in spermidine binding. D155 (proton acceptor) is an active-site residue.

Belongs to the spermidine/spermine synthase family. As to quaternary structure, homodimer or homotetramer.

Its subcellular location is the cytoplasm. The catalysed reaction is S-adenosyl 3-(methylsulfanyl)propylamine + putrescine = S-methyl-5'-thioadenosine + spermidine + H(+). Its pathway is amine and polyamine biosynthesis; spermidine biosynthesis; spermidine from putrescine: step 1/1. Catalyzes the irreversible transfer of a propylamine group from the amino donor S-adenosylmethioninamine (decarboxy-AdoMet) to putrescine (1,4-diaminobutane) to yield spermidine. The chain is Polyamine aminopropyltransferase from Helicobacter pylori (strain HPAG1).